The chain runs to 27 residues: Cupiennin-3a (27 aa).

Glu27 is modified (glutamic acid 1-amide).

As to expression, expressed by the venom gland.

It is found in the secreted. This chain is Cupiennin-3a, found in Cupiennius salei (American wandering spider).